A 156-amino-acid chain; its full sequence is Snaclec jerdonibitin subunit alpha (156 aa).

An N-terminal signal peptide occupies residues 1-23; it reads MGRFIFVSFGLLVVFLSLSGTGA. Disulfide bonds link Cys-25/Cys-36, Cys-53/Cys-150, and Cys-125/Cys-142. The C-type lectin domain occupies 32-151; it reads FRQYCYRVFK…CGQQHLFMCK (120 aa).

The protein belongs to the snaclec family. Heterodimer of subunits alpha and beta; disulfide-linked. As to expression, expressed by the venom gland.

It localises to the secreted. In terms of biological role, snaclec that dose-dependently inhibits platelet aggregation induced by ristocetin or low-dose thrombin, but not by high-dose thrombin. Binds to GPIbalpha (GP1BA). In vivo, also dose-dependently induces thrombocytopenia of mice and platelet counts remains at very low level even after 18 hours intravenous injection. The polypeptide is Snaclec jerdonibitin subunit alpha (Protobothrops jerdonii (Jerdon's pitviper)).